The chain runs to 306 residues: UDP-N-acetylenolpyruvoylglucosamine reductase (306 aa).

Residues 25-188 (RVGGPADWLF…IEARFRAEPG (164 aa)) form the FAD-binding PCMH-type domain. Residue arginine 168 is part of the active site. Basic and acidic residues predominate over residues 199-214 (EQLARRDASQPTKDRS). Residues 199–232 (EQLARRDASQPTKDRSAGSTFRNPAGYSSTGRAD) are disordered. The span at 215–229 (AGSTFRNPAGYSSTG) shows a compositional bias: polar residues. The Proton donor role is filled by serine 217. Glutamate 299 is a catalytic residue.

It belongs to the MurB family. FAD serves as cofactor.

The protein resides in the cytoplasm. It catalyses the reaction UDP-N-acetyl-alpha-D-muramate + NADP(+) = UDP-N-acetyl-3-O-(1-carboxyvinyl)-alpha-D-glucosamine + NADPH + H(+). Its pathway is cell wall biogenesis; peptidoglycan biosynthesis. Cell wall formation. This chain is UDP-N-acetylenolpyruvoylglucosamine reductase, found in Paracoccus denitrificans (strain Pd 1222).